Reading from the N-terminus, the 103-residue chain is Large ribosomal subunit protein bL21 (103 aa).

The protein belongs to the bacterial ribosomal protein bL21 family. In terms of assembly, part of the 50S ribosomal subunit. Contacts protein L20.

In terms of biological role, this protein binds to 23S rRNA in the presence of protein L20. The polypeptide is Large ribosomal subunit protein bL21 (Borreliella afzelii (strain PKo) (Borrelia afzelii)).